Consider the following 325-residue polypeptide: GMP reductase (325 aa).

The Thioimidate intermediate role is filled by Cys174. An NADP(+)-binding site is contributed by 203-226; that stretch reads IIADGGIRTNGDIAKSIRFGANMV.

It belongs to the IMPDH/GMPR family. GuaC type 2 subfamily.

The catalysed reaction is IMP + NH4(+) + NADP(+) = GMP + NADPH + 2 H(+). Catalyzes the irreversible NADPH-dependent deamination of GMP to IMP. It functions in the conversion of nucleobase, nucleoside and nucleotide derivatives of G to A nucleotides, and in maintaining the intracellular balance of A and G nucleotides. The protein is GMP reductase of Latilactobacillus sakei subsp. sakei (strain 23K) (Lactobacillus sakei subsp. sakei).